A 174-amino-acid chain; its full sequence is Phosphopantetheine adenylyltransferase (174 aa).

T10 contributes to the substrate binding site. ATP is bound by residues 10 to 11 and H18; that span reads TF. Substrate is bound by residues K44, L76, and R90. ATP is bound by residues 91 to 93, E101, and 126 to 132; these read GLR and HAYISSS.

The protein belongs to the bacterial CoaD family. Homohexamer. Requires Mg(2+) as cofactor.

The protein localises to the cytoplasm. The enzyme catalyses (R)-4'-phosphopantetheine + ATP + H(+) = 3'-dephospho-CoA + diphosphate. The protein operates within cofactor biosynthesis; coenzyme A biosynthesis; CoA from (R)-pantothenate: step 4/5. Reversibly transfers an adenylyl group from ATP to 4'-phosphopantetheine, yielding dephospho-CoA (dPCoA) and pyrophosphate. This chain is Phosphopantetheine adenylyltransferase, found in Alkalilimnicola ehrlichii (strain ATCC BAA-1101 / DSM 17681 / MLHE-1).